We begin with the raw amino-acid sequence, 421 residues long: Imidazolonepropionase (421 aa).

2 residues coordinate Fe(3+): H81 and H83. Residues H81 and H83 each coordinate Zn(2+). 4-imidazolone-5-propanoate-binding residues include R90, Y153, and H186. Y153 is a binding site for N-formimidoyl-L-glutamate. H251 is a binding site for Fe(3+). H251 lines the Zn(2+) pocket. Position 254 (E254) interacts with 4-imidazolone-5-propanoate. D326 serves as a coordination point for Fe(3+). D326 is a binding site for Zn(2+). N-formimidoyl-L-glutamate contacts are provided by N328 and G330. S331 provides a ligand contact to 4-imidazolone-5-propanoate.

The protein belongs to the metallo-dependent hydrolases superfamily. HutI family. It depends on Zn(2+) as a cofactor. The cofactor is Fe(3+).

The protein resides in the cytoplasm. The catalysed reaction is 4-imidazolone-5-propanoate + H2O = N-formimidoyl-L-glutamate. It functions in the pathway amino-acid degradation; L-histidine degradation into L-glutamate; N-formimidoyl-L-glutamate from L-histidine: step 3/3. Catalyzes the hydrolytic cleavage of the carbon-nitrogen bond in imidazolone-5-propanoate to yield N-formimidoyl-L-glutamate. It is the third step in the universal histidine degradation pathway. This is Imidazolonepropionase from Streptococcus pyogenes serotype M6 (strain ATCC BAA-946 / MGAS10394).